A 276-amino-acid chain; its full sequence is Glutamate 5-kinase (276 aa).

K14 contacts ATP. Substrate contacts are provided by S54, D141, and N157. ATP contacts are provided by residues S177 to D178 and T219 to K225.

This sequence belongs to the glutamate 5-kinase family.

Its subcellular location is the cytoplasm. The catalysed reaction is L-glutamate + ATP = L-glutamyl 5-phosphate + ADP. The protein operates within amino-acid biosynthesis; L-proline biosynthesis; L-glutamate 5-semialdehyde from L-glutamate: step 1/2. Catalyzes the transfer of a phosphate group to glutamate to form L-glutamate 5-phosphate. The sequence is that of Glutamate 5-kinase from Listeria innocua serovar 6a (strain ATCC BAA-680 / CLIP 11262).